Reading from the N-terminus, the 481-residue chain is UDP-N-acetylmuramate--L-alanine ligase (481 aa).

Residue 122 to 128 (GVHGKTT) participates in ATP binding.

It belongs to the MurCDEF family.

The protein localises to the cytoplasm. It catalyses the reaction UDP-N-acetyl-alpha-D-muramate + L-alanine + ATP = UDP-N-acetyl-alpha-D-muramoyl-L-alanine + ADP + phosphate + H(+). The protein operates within cell wall biogenesis; peptidoglycan biosynthesis. Cell wall formation. The sequence is that of UDP-N-acetylmuramate--L-alanine ligase from Treponema pallidum (strain Nichols).